Here is a 284-residue protein sequence, read N- to C-terminus: Phosphatidylserine decarboxylase proenzyme (284 aa).

Residues Asp-88, His-145, and Ser-251 each act as charge relay system; for autoendoproteolytic cleavage activity in the active site. The active-site Schiff-base intermediate with substrate; via pyruvic acid; for decarboxylase activity is Ser-251. Residue Ser-251 is modified to Pyruvic acid (Ser); by autocatalysis.

The protein belongs to the phosphatidylserine decarboxylase family. PSD-B subfamily. Prokaryotic type I sub-subfamily. In terms of assembly, heterodimer of a large membrane-associated beta subunit and a small pyruvoyl-containing alpha subunit. Requires pyruvate as cofactor. Post-translationally, is synthesized initially as an inactive proenzyme. Formation of the active enzyme involves a self-maturation process in which the active site pyruvoyl group is generated from an internal serine residue via an autocatalytic post-translational modification. Two non-identical subunits are generated from the proenzyme in this reaction, and the pyruvate is formed at the N-terminus of the alpha chain, which is derived from the carboxyl end of the proenzyme. The autoendoproteolytic cleavage occurs by a canonical serine protease mechanism, in which the side chain hydroxyl group of the serine supplies its oxygen atom to form the C-terminus of the beta chain, while the remainder of the serine residue undergoes an oxidative deamination to produce ammonia and the pyruvoyl prosthetic group on the alpha chain. During this reaction, the Ser that is part of the protease active site of the proenzyme becomes the pyruvoyl prosthetic group, which constitutes an essential element of the active site of the mature decarboxylase.

Its subcellular location is the cell membrane. The catalysed reaction is a 1,2-diacyl-sn-glycero-3-phospho-L-serine + H(+) = a 1,2-diacyl-sn-glycero-3-phosphoethanolamine + CO2. The protein operates within phospholipid metabolism; phosphatidylethanolamine biosynthesis; phosphatidylethanolamine from CDP-diacylglycerol: step 2/2. Its function is as follows. Catalyzes the formation of phosphatidylethanolamine (PtdEtn) from phosphatidylserine (PtdSer). The protein is Phosphatidylserine decarboxylase proenzyme of Polaromonas sp. (strain JS666 / ATCC BAA-500).